We begin with the raw amino-acid sequence, 1366 residues long: DNA-directed RNA polymerase subunit beta'' (1366 aa).

Zn(2+) contacts are provided by C220, C291, C298, and C301.

Belongs to the RNA polymerase beta' chain family. RpoC2 subfamily. In terms of assembly, in plastids the minimal PEP RNA polymerase catalytic core is composed of four subunits: alpha, beta, beta', and beta''. When a (nuclear-encoded) sigma factor is associated with the core the holoenzyme is formed, which can initiate transcription. Zn(2+) serves as cofactor.

The protein localises to the plastid. It is found in the chloroplast. The enzyme catalyses RNA(n) + a ribonucleoside 5'-triphosphate = RNA(n+1) + diphosphate. Functionally, DNA-dependent RNA polymerase catalyzes the transcription of DNA into RNA using the four ribonucleoside triphosphates as substrates. The chain is DNA-directed RNA polymerase subunit beta'' from Phaseolus vulgaris (Kidney bean).